The sequence spans 285 residues: 4-diphosphocytidyl-2-C-methyl-D-erythritol kinase (285 aa).

Lys12 is an active-site residue. 94-104 (PAQAGMGGGSS) is a binding site for ATP. Residue Asp136 is part of the active site.

The protein belongs to the GHMP kinase family. IspE subfamily.

It carries out the reaction 4-CDP-2-C-methyl-D-erythritol + ATP = 4-CDP-2-C-methyl-D-erythritol 2-phosphate + ADP + H(+). Its pathway is isoprenoid biosynthesis; isopentenyl diphosphate biosynthesis via DXP pathway; isopentenyl diphosphate from 1-deoxy-D-xylulose 5-phosphate: step 3/6. In terms of biological role, catalyzes the phosphorylation of the position 2 hydroxy group of 4-diphosphocytidyl-2C-methyl-D-erythritol. This chain is 4-diphosphocytidyl-2-C-methyl-D-erythritol kinase, found in Paracidovorax citrulli (strain AAC00-1) (Acidovorax citrulli).